Reading from the N-terminus, the 217-residue chain is Probable transaldolase (217 aa).

Residue lysine 83 is the Schiff-base intermediate with substrate of the active site.

This sequence belongs to the transaldolase family. Type 3B subfamily.

Its subcellular location is the cytoplasm. The catalysed reaction is D-sedoheptulose 7-phosphate + D-glyceraldehyde 3-phosphate = D-erythrose 4-phosphate + beta-D-fructose 6-phosphate. It functions in the pathway carbohydrate degradation; pentose phosphate pathway; D-glyceraldehyde 3-phosphate and beta-D-fructose 6-phosphate from D-ribose 5-phosphate and D-xylulose 5-phosphate (non-oxidative stage): step 2/3. Its function is as follows. Transaldolase is important for the balance of metabolites in the pentose-phosphate pathway. This chain is Probable transaldolase, found in Anaeromyxobacter dehalogenans (strain 2CP-C).